Reading from the N-terminus, the 61-residue chain is Photosystem II reaction center protein K (61 aa).

The propeptide occupies 1 to 24 (MLNIFNLICICFNSALFSSSFLFA). A helical transmembrane segment spans residues 36–56 (IVDFMPVIPVLFFLLAFVWQA).

It belongs to the PsbK family. As to quaternary structure, PSII is composed of 1 copy each of membrane proteins PsbA, PsbB, PsbC, PsbD, PsbE, PsbF, PsbH, PsbI, PsbJ, PsbK, PsbL, PsbM, PsbT, PsbX, PsbY, PsbZ, Psb30/Ycf12, at least 3 peripheral proteins of the oxygen-evolving complex and a large number of cofactors. It forms dimeric complexes.

It is found in the plastid. The protein localises to the chloroplast thylakoid membrane. Its function is as follows. One of the components of the core complex of photosystem II (PSII). PSII is a light-driven water:plastoquinone oxidoreductase that uses light energy to abstract electrons from H(2)O, generating O(2) and a proton gradient subsequently used for ATP formation. It consists of a core antenna complex that captures photons, and an electron transfer chain that converts photonic excitation into a charge separation. The chain is Photosystem II reaction center protein K from Gossypium barbadense (Sea Island cotton).